Here is a 183-residue protein sequence, read N- to C-terminus: Threonylcarbamoyl-AMP synthase (183 aa).

One can recognise a YrdC-like domain in the interval 1 to 183; the sequence is MNREQIANAL…LRTNQLFRQG (183 aa).

It belongs to the SUA5 family. TsaC subfamily.

It is found in the cytoplasm. It carries out the reaction L-threonine + hydrogencarbonate + ATP = L-threonylcarbamoyladenylate + diphosphate + H2O. In terms of biological role, required for the formation of a threonylcarbamoyl group on adenosine at position 37 (t(6)A37) in tRNAs that read codons beginning with adenine. Catalyzes the conversion of L-threonine, HCO(3)(-)/CO(2) and ATP to give threonylcarbamoyl-AMP (TC-AMP) as the acyladenylate intermediate, with the release of diphosphate. This chain is Threonylcarbamoyl-AMP synthase, found in Haemophilus influenzae (strain PittEE).